The primary structure comprises 509 residues: Maturase K (509 aa).

Belongs to the intron maturase 2 family. MatK subfamily.

The protein resides in the plastid. The protein localises to the chloroplast. Its function is as follows. Usually encoded in the trnK tRNA gene intron. Probably assists in splicing its own and other chloroplast group II introns. In Thuja occidentalis (Northern white-cedar), this protein is Maturase K.